A 530-amino-acid chain; its full sequence is ATP-dependent 6-phosphofructokinase 4, chloroplastic (530 aa).

The transit peptide at 1 to 54 directs the protein to the chloroplast; sequence MEASISFLGSTKPNISLFNPSSNVLPRRDFPLPALKLKKVSVLPRILHQKRLIR. At serine 121 the chain carries Phosphoserine. Residues glycine 152, 215–216, and 240–243 contribute to the ATP site; these read RG and GGGT. Residues 269–271, 314–316, glutamate 370, and 427–430 contribute to the substrate site; these read TID, MGR, and YMIR. Residue aspartate 271 is the Proton acceptor of the active site.

It belongs to the phosphofructokinase type A (PFKA) family. PPi-dependent PFK group II subfamily. Atypical ATP-dependent clade 'X' sub-subfamily. In terms of assembly, homotetramer. Mg(2+) is required as a cofactor. As to expression, expressed in leaves, stems and flowers.

The protein resides in the plastid. The protein localises to the chloroplast. It catalyses the reaction beta-D-fructose 6-phosphate + ATP = beta-D-fructose 1,6-bisphosphate + ADP + H(+). It participates in carbohydrate degradation; glycolysis; D-glyceraldehyde 3-phosphate and glycerone phosphate from D-glucose: step 3/4. Allosterically activated by AMP. Catalyzes the phosphorylation of D-fructose 6-phosphate to fructose 1,6-bisphosphate by ATP, the first committing step of glycolysis. In Arabidopsis thaliana (Mouse-ear cress), this protein is ATP-dependent 6-phosphofructokinase 4, chloroplastic.